A 316-amino-acid polypeptide reads, in one-letter code: 4-hydroxy-3-methylbut-2-enyl diphosphate reductase (316 aa).

C12 serves as a coordination point for [4Fe-4S] cluster. (2E)-4-hydroxy-3-methylbut-2-enyl diphosphate contacts are provided by H41 and H74. Residues H41 and H74 each coordinate dimethylallyl diphosphate. Positions 41 and 74 each coordinate isopentenyl diphosphate. A [4Fe-4S] cluster-binding site is contributed by C96. H124 contacts (2E)-4-hydroxy-3-methylbut-2-enyl diphosphate. H124 contributes to the dimethylallyl diphosphate binding site. H124 serves as a coordination point for isopentenyl diphosphate. E126 (proton donor) is an active-site residue. A (2E)-4-hydroxy-3-methylbut-2-enyl diphosphate-binding site is contributed by T167. Residue C197 coordinates [4Fe-4S] cluster. Residues S225, S226, N227, and S269 each contribute to the (2E)-4-hydroxy-3-methylbut-2-enyl diphosphate site. Dimethylallyl diphosphate contacts are provided by S225, S226, N227, and S269. Residues S225, S226, N227, and S269 each coordinate isopentenyl diphosphate.

This sequence belongs to the IspH family. Homodimer. [4Fe-4S] cluster serves as cofactor.

It catalyses the reaction isopentenyl diphosphate + 2 oxidized [2Fe-2S]-[ferredoxin] + H2O = (2E)-4-hydroxy-3-methylbut-2-enyl diphosphate + 2 reduced [2Fe-2S]-[ferredoxin] + 2 H(+). The enzyme catalyses dimethylallyl diphosphate + 2 oxidized [2Fe-2S]-[ferredoxin] + H2O = (2E)-4-hydroxy-3-methylbut-2-enyl diphosphate + 2 reduced [2Fe-2S]-[ferredoxin] + 2 H(+). It participates in isoprenoid biosynthesis; dimethylallyl diphosphate biosynthesis; dimethylallyl diphosphate from (2E)-4-hydroxy-3-methylbutenyl diphosphate: step 1/1. The protein operates within isoprenoid biosynthesis; isopentenyl diphosphate biosynthesis via DXP pathway; isopentenyl diphosphate from 1-deoxy-D-xylulose 5-phosphate: step 6/6. Catalyzes the conversion of 1-hydroxy-2-methyl-2-(E)-butenyl 4-diphosphate (HMBPP) into a mixture of isopentenyl diphosphate (IPP) and dimethylallyl diphosphate (DMAPP). Acts in the terminal step of the DOXP/MEP pathway for isoprenoid precursor biosynthesis. The chain is 4-hydroxy-3-methylbut-2-enyl diphosphate reductase from Salmonella paratyphi A (strain ATCC 9150 / SARB42).